The primary structure comprises 255 residues: Ribosomal RNA small subunit methyltransferase A (255 aa).

S-adenosyl-L-methionine contacts are provided by Asn-11, Leu-13, Gly-38, Glu-59, Asp-83, and Asn-101.

Belongs to the class I-like SAM-binding methyltransferase superfamily. rRNA adenine N(6)-methyltransferase family. RsmA subfamily.

Its subcellular location is the cytoplasm. The enzyme catalyses adenosine(1518)/adenosine(1519) in 16S rRNA + 4 S-adenosyl-L-methionine = N(6)-dimethyladenosine(1518)/N(6)-dimethyladenosine(1519) in 16S rRNA + 4 S-adenosyl-L-homocysteine + 4 H(+). Specifically dimethylates two adjacent adenosines (A1518 and A1519) in the loop of a conserved hairpin near the 3'-end of 16S rRNA in the 30S particle. May play a critical role in biogenesis of 30S subunits. The sequence is that of Ribosomal RNA small subunit methyltransferase A from Thiobacillus denitrificans (strain ATCC 25259 / T1).